The chain runs to 259 residues: Keratin-associated protein 10-8 (259 aa).

Positions 26–243 (HVSRVSSPST…SCQPSCCHPA (218 aa)) are 19 X 5 AA repeats of C-C-X(3). 19 repeat units span residues 50-54 (CCEPR), 60-64 (CCTPS), 65-69 (CCAPA), 98-102 (CCQQS), 108-112 (CCTSS), 118-122 (CCVPV), 123-127 (CCKSN), 133-137 (CCVSI), 145-149 (CCQQS), 155-159 (CCTFS), 165-169 (CCVPI), 170-174 (CCKPI), 175-179 (CCVPV), 187-191 (CCQKS), 197-201 (CCTTS), 202-206 (CCRPS), 221-225 (CCVPV), 228-232 (CCVPA), and 239-243 (CCHPA).

The protein belongs to the KRTAP type 10 family. In terms of assembly, interacts with hair keratins. As to expression, restricted to a narrow region of the hair fiber cuticle, lying approximately 20 cell layers above the apex of the dermal papilla of the hair root; not detected in any other tissues.

Functionally, in the hair cortex, hair keratin intermediate filaments are embedded in an interfilamentous matrix, consisting of hair keratin-associated proteins (KRTAP), which are essential for the formation of a rigid and resistant hair shaft through their extensive disulfide bond cross-linking with abundant cysteine residues of hair keratins. The matrix proteins include the high-sulfur and high-glycine-tyrosine keratins. The sequence is that of Keratin-associated protein 10-8 (KRTAP10-8) from Homo sapiens (Human).